Here is a 136-residue protein sequence, read N- to C-terminus: ATP synthase epsilon chain (136 aa).

The protein belongs to the ATPase epsilon chain family. F-type ATPases have 2 components, CF(1) - the catalytic core - and CF(0) - the membrane proton channel. CF(1) has five subunits: alpha(3), beta(3), gamma(1), delta(1), epsilon(1). CF(0) has three main subunits: a, b and c.

It is found in the cell membrane. Produces ATP from ADP in the presence of a proton gradient across the membrane. The protein is ATP synthase epsilon chain of Ureaplasma parvum serovar 3 (strain ATCC 27815 / 27 / NCTC 11736).